The primary structure comprises 907 residues: Putative pentatricopeptide repeat-containing protein At5g59900 (907 aa).

PPR repeat units follow at residues 103 to 137, 155 to 185, 191 to 225, 226 to 260, 261 to 295, 296 to 330, 331 to 365, 366 to 400, 401 to 435, 436 to 470, 471 to 505, 506 to 540, 541 to 575, 576 to 610, 611 to 645, 646 to 680, 681 to 715, 716 to 750, 751 to 782, 786 to 820, 821 to 855, and 856 to 890; these read STAS…ALKP, SSSS…MITK, EVRT…GIRP, DVYI…GCDV, NIVP…DLKP, DVVT…RFSP, SEAA…GVSP, NLFV…GLRP, NDVT…GLKL, SVYP…KLEP, TVVT…GIAP, SIYT…NVKP, NRVT…GIVP, DTYS…NCEL, NEIC…GVDL, DLVC…GLKP, DDVI…GCVP, NEVT…SSVP, NQVT…ILKG, NTAT…GVSP, DCIT…GIRP, and DRVA…GLIP. The segment at 887–907 is disordered; sequence GLIPNNKTSRTTTSNDTSSKS. The span at 891–907 shows a compositional bias: low complexity; sequence NNKTSRTTTSNDTSSKS.

This sequence belongs to the PPR family. P subfamily.

The chain is Putative pentatricopeptide repeat-containing protein At5g59900 from Arabidopsis thaliana (Mouse-ear cress).